Here is a 98-residue protein sequence, read N- to C-terminus: YcgL domain-containing protein CJA_2437 (98 aa).

Positions 3-87 (IIAEIYRSPK…RDLVDAEAKR (85 aa)) constitute a YcgL domain.

The protein is YcgL domain-containing protein CJA_2437 of Cellvibrio japonicus (strain Ueda107) (Pseudomonas fluorescens subsp. cellulosa).